The sequence spans 655 residues: Squalene-tetrahymanol cyclase THC1 (655 aa).

A signal peptide spans 1 to 20 (MKKILIGLIIGLFLFSSVNA). N-linked (GlcNAc...) asparagine glycans are attached at residues N23, N44, N69, and N77. Catalysis depends on D373, which acts as the Proton donor. PFTB repeat units follow at residues 393 to 435 (IPET…GIAN) and 515 to 562 (VQNS…GLLA).

It belongs to the terpene cyclase/mutase family.

The protein resides in the membrane. The enzyme catalyses tetrahymanol = squalene + H2O. With respect to regulation, 2,3-iminosqualene and N,N-dimethyldodecylamine~N-oxlde are effective inhibitors with IC(50) values of 50 and 30 nM, respectively. Squalene cyclase that catalyzes the oxygen-independent cyclization of squalene into tetrahymanol, a triterpenoid sterol with five cyclohexyl rings that is involved in membrane integrity, permeability and fluidity. The sequence is that of Squalene-tetrahymanol cyclase THC1 from Tetrahymena thermophila (strain SB210).